A 316-amino-acid chain; its full sequence is Phosphoglycerate mutase-like protein AT74 (316 aa).

His17 acts as the Tele-phosphohistidine intermediate in catalysis. The active-site Proton donor/acceptor is the Glu106. Residues 275–316 (KECETEATEDREEEEEEEGKRVNLLTSSEYSNEPELYNGQCC) are disordered. Residues 279 to 291 (TEATEDREEEEEE) are compositionally biased toward acidic residues.

Belongs to the phosphoglycerate mutase family. As to expression, expressed in roots, leaves, stems, flowers and siliques.

Phosphoglycerate mutase-like protein lacking PGM activity. May play a role in carbohydrates metabolism. The sequence is that of Phosphoglycerate mutase-like protein AT74 from Arabidopsis thaliana (Mouse-ear cress).